A 159-amino-acid polypeptide reads, in one-letter code: Ribosomal RNA large subunit methyltransferase H (159 aa).

S-adenosyl-L-methionine-binding positions include leucine 76, glycine 108, and 127 to 132 (FGRMTL).

The protein belongs to the RNA methyltransferase RlmH family. As to quaternary structure, homodimer.

It localises to the cytoplasm. The enzyme catalyses pseudouridine(1915) in 23S rRNA + S-adenosyl-L-methionine = N(3)-methylpseudouridine(1915) in 23S rRNA + S-adenosyl-L-homocysteine + H(+). In terms of biological role, specifically methylates the pseudouridine at position 1915 (m3Psi1915) in 23S rRNA. This Lactococcus lactis subsp. cremoris (strain SK11) protein is Ribosomal RNA large subunit methyltransferase H.